Consider the following 1980-residue polypeptide: Sodium channel protein type 8 subunit alpha (1980 aa).

2 disordered regions span residues 1–20 (MAAR…FTPE) and 28–62 (RIAE…LEAG). Over 1-132 (MAARLLAPPG…RIAIKILIHS (132 aa)) the chain is Cytoplasmic. The span at 28-61 (RIAESKLKKPPKADGSHREDDEDSKPKPNSDLEA) shows a compositional bias: basic and acidic residues. The I repeat unit spans residues 114–442 (ILSPFNLIRR…KAMLEQLKKQ (329 aa)). A helical membrane pass occupies residues 133–151 (VFSMIIMCTILTNCVFMTF). Over 152 to 158 (SNPPDWS) the chain is Extracellular. The helical transmembrane segment at 159-179 (KNVEYTFTGIYTFESLVKIIA) threads the bilayer. At 180–193 (RGFCIDGFTFLRDP) the chain is on the cytoplasmic side. The chain crosses the membrane as a helical span at residues 194 to 211 (WNWLDFSVIMMAYITEFV). The Extracellular segment spans residues 212–217 (NLGNVS). The N-linked (GlcNAc...) asparagine glycan is linked to Asn215. The helical transmembrane segment at 218–234 (ALRTFRVLRALKTISVI) threads the bilayer. Topologically, residues 235 to 253 (PGLKTIVGALIQSVKKLSD) are cytoplasmic. Residues 254 to 273 (VMILTVFCLSVFALIGLQLF) traverse the membrane as a helical segment. Residues 274-355 (MGNLRNKCVV…PNYGYTSFDT (82 aa)) lie on the Extracellular side of the membrane. The cysteines at positions 281 and 333 are disulfide-linked. 3 N-linked (GlcNAc...) asparagine glycosylation sites follow: Asn289, Asn295, and Asn308. An N-linked (GlcNAc...) (high mannose) asparagine glycan is attached at Asn326. The pore-forming intramembrane region spans 356-380 (FSWAFLALFRLMTQDYWENLYQLTL). A Na(+)-binding site is contributed by Glu373. The Extracellular segment spans residues 381-387 (RAAGKTY). A helical transmembrane segment spans residues 388–408 (MIFFVLVIFVGSFYLVNLILA). At 409 to 753 (VVAMAYEEQN…EIVNLIVMDP (345 aa)) the chain is on the cytoplasmic side. Disordered stretches follow at residues 446 to 530 (AQAA…KAFR) and 568 to 602 (FRGP…DSLF). The span at 474–486 (PRSSSEISKLSSK) shows a compositional bias: low complexity. Over residues 489 to 500 (KERRNRRKKRKQ) the composition is skewed to basic residues. 2 stretches are compositionally biased toward basic and acidic residues: residues 501–530 (KELS…KAFR) and 586–602 (DEHS…DSLF). Phosphoserine is present on residues Ser518 and Ser520. The stretch at 735 to 1007 (CHPYWIKLKE…QISVIRIKKG (273 aa)) is one II repeat. The helical transmembrane segment at 754–772 (FVDLAITICIVLNTLFMAM) threads the bilayer. The Extracellular segment spans residues 773-783 (EHHPMTPQFEH). The helical transmembrane segment at 784–803 (VLAVGNLVFTGIFTAEMFLK) threads the bilayer. Topologically, residues 804–817 (LIAMDPYYYFQEGW) are cytoplasmic. A helical transmembrane segment spans residues 818-837 (NIFDGFIVSLSLMELSLADV). Topologically, residues 838–839 (EG) are extracellular. Residues 840–857 (LSVLRSFRLLRVFKLAKS) form a helical membrane-spanning segment. The Cytoplasmic portion of the chain corresponds to 858–873 (WPTLNMLIKIIGNSVG). A helical transmembrane segment spans residues 874–892 (ALGNLTLVLAIIVFIFAVV). Residues 893–921 (GMQLFGKSYKECVCKINQDCELPRWHMHD) are Extracellular-facing. Cys906 and Cys912 are oxidised to a cystine. The segment at residues 922 to 942 (FFHSFLIVFRVLCGEWIETMW) is an intramembrane region (pore-forming). Glu936 and Glu939 together coordinate Na(+). The Extracellular portion of the chain corresponds to 943–955 (DCMEVAGQAMCLI). Cys944 and Cys953 are disulfide-bonded. A helical transmembrane segment spans residues 956 to 976 (VFMMVMVIGNLVVLNLFLALL). Residues 977–1199 (LSSFSADNLA…TCFLIVEHNW (223 aa)) lie on the Cytoplasmic side of the membrane. The segment at 1107 to 1148 (NLNTEDVSSESDPEGSKDKLDDTSSSEGSTIDIKPEVEEVPV) is disordered. The III repeat unit spans residues 1180–1495 (LGKSWWILRK…KKYYNAMKKL (316 aa)). Residues 1200 to 1217 (FETFIIFMILLSSGALAF) traverse the membrane as a helical segment. The Extracellular portion of the chain corresponds to 1218-1230 (EDIYIEQRKTIRT). Residues 1231–1249 (ILEYADKVFTYIFILEMLL) traverse the membrane as a helical segment. Topologically, residues 1250–1263 (KWTAYGFVKFFTNA) are cytoplasmic. The chain crosses the membrane as a helical span at residues 1264–1282 (WCWLDFLIVAVSLVSLIAN). Over 1283 to 1290 (ALGYSELG) the chain is Extracellular. A helical transmembrane segment spans residues 1291 to 1309 (AIKSLRTLRALRPLRALSR). Residues 1310 to 1326 (FEGMRVVVNALVGAIPS) are Cytoplasmic-facing. The chain crosses the membrane as a helical span at residues 1327-1346 (IMNVLLVCLIFWLIFSIMGV). The Extracellular portion of the chain corresponds to 1347–1399 (NLFAGKYHYCFNETSEIRFEIEDVNNKTECEKLMEGNNTEIRWKNVKINFDNV). Cysteines 1356 and 1376 form a disulfide. Asn1358, Asn1372, and Asn1383 each carry an N-linked (GlcNAc...) asparagine glycan. An intramembrane region (pore-forming) is located at residues 1400–1421 (GAGYLALLQVATFKGWMDIMYA). Residues 1422–1438 (AVDSRKPDEQPKYEDNI) are Extracellular-facing. A helical membrane pass occupies residues 1439–1460 (YMYIYFVIFIIFGSFFTLNLFI). Residues 1461–1523 (GVIIDNFNQQ…IVFDFVTQQA (63 aa)) lie on the Cytoplasmic side of the membrane. At Ser1497 the chain carries Phosphoserine; by PKC. An IV repeat occupies 1504-1801 (IPRPLNKIQG…WEKFDPDATQ (298 aa)). A helical transmembrane segment spans residues 1524–1541 (FDIVIMMLICLNMVTMMV). Topologically, residues 1542–1552 (ETDTQSKQMEN) are extracellular. A helical membrane pass occupies residues 1553–1571 (ILYWINLVFVIFFTCECVL). Residues 1572–1583 (KMFALRHYYFTI) lie on the Cytoplasmic side of the membrane. A helical transmembrane segment spans residues 1584–1601 (GWNIFDFVVVILSIVGMF). At 1602-1614 (LADIIEKYFVSPT) the chain is on the extracellular side. The helical transmembrane segment at 1615-1631 (LFRVIRLARIGRILRLI) threads the bilayer. The Cytoplasmic portion of the chain corresponds to 1632-1650 (KGAKGIRTLLFALMMSLPA). A helical transmembrane segment spans residues 1651–1668 (LFNIGLLLFLVMFIFSIF). At 1669–1690 (GMSNFAYVKHEAGIDDMFNFET) the chain is on the extracellular side. The pore-forming intramembrane region spans 1691-1713 (FGNSMICLFQITTSAGWDGLLLP). Residues 1714 to 1742 (ILNRPPDCSLDKEHPGSGFKGDCGNPSVG) lie on the Extracellular side of the membrane. The cysteines at positions 1721 and 1736 are disulfide-linked. Residues 1743–1765 (IFFFVSYIIISFLIVVNMYIAII) form a helical membrane-spanning segment. Residues 1766–1980 (LENFSVATEE…RQKEVRESKC (215 aa)) are Cytoplasmic-facing. Residues 1895 to 1924 (EEVSAVVLQRAYRGHLARRGFICKKTTSNK) form the IQ domain. The disordered stretch occupies residues 1922–1980 (SNKLENGGTHREKKESTPSTASLPSYDSVTKPEKEKQQRAEEGRRERAKRQKEVRESKC). Residues 1938–1949 (TPSTASLPSYDS) show a composition bias toward polar residues. Over residues 1951 to 1980 (TKPEKEKQQRAEEGRRERAKRQKEVRESKC) the composition is skewed to basic and acidic residues.

It belongs to the sodium channel (TC 1.A.1.10) family. Nav1.6/SCN8A subfamily. As to quaternary structure, the voltage-sensitive sodium channel consists of an ion-conducting pore-forming alpha subunit regulated by one or more beta-1 (SCN1B), beta-2 (SCN2B), beta-3 (SCN3B) and/or beta-4 (SCN4B) subunits. Beta-1 (SCN1B) and beta-3 (SCN3B) are non-covalently associated with alpha, while beta-2 (SCN2B) and beta-4 (SCN4B) are covalently linked by disulfide bonds. Interacts with NEDD4 and NEDD4L. Interacts with FGF13. Interacts with FGF14, GBG3, GBB2 and SCN1B. Interacts with TMEM233. Interacts with the conotoxin GVIIJ. Interacts with the spider beta/delta-theraphotoxin-Pre1a. Interacts with CALM1; the interaction modulates the inactivation rate of SCN8A. May be ubiquitinated by NEDD4L; which would promote its endocytosis. Post-translationally, phosphorylation at Ser-1497 by PKC in a highly conserved cytoplasmic loop slows inactivation of the sodium channel and reduces peak sodium currents. Expressed in the hippocampus with increased expression in epileptic tissue compared to normal adjacent tissue (at protein level). As to expression, expressed in non-neuronal tissues, such as monocytes/macrophages.

It is found in the cell membrane. It localises to the cell projection. Its subcellular location is the axon. The protein resides in the cytoplasmic vesicle. The protein localises to the podosome. It catalyses the reaction Na(+)(in) = Na(+)(out). With respect to regulation, inhibited by tetrodotoxin and, more weakly, by its metabolite 4,9-ah-tetrodotoxin. Functionally, pore-forming subunit of a voltage-gated sodium channel complex assuming opened or closed conformations in response to the voltage difference across membranes and through which sodium ions selectively pass along their electrochemical gradient. Contributes to neuronal excitability by regulating action potential threshold and propagation. Its function is as follows. More specifically expressed in non-neuronal cells, could play a role in sodium release from intracellular compartments and participate in the control of podosomes formation and macrophages adhesion and movement. The sequence is that of Sodium channel protein type 8 subunit alpha from Homo sapiens (Human).